A 453-amino-acid chain; its full sequence is Transmembrane protease serine 3 (453 aa).

Over 1-48 the chain is Cytoplasmic; it reads MGENDPPAAEAPFSFRSLFGLDDLKISPVAPDGDAVAAQILSLLPLKF. A helical; Signal-anchor for type II membrane protein membrane pass occupies residues 49-69; sequence FPIIVIGIIALILALAIGLGI. The Extracellular portion of the chain corresponds to 70–453; it reads HFDCSGKYRC…HEQLERDLKT (384 aa). The 37-residue stretch at 72–108 folds into the LDL-receptor class A domain; it reads DCSGKYRCHSSFKCIELTARCDGVSDCKNAEDEYRCV. 10 disulfide bridges follow: Cys-73–Cys-85, Cys-79–Cys-98, Cys-92–Cys-107, Cys-129–Cys-194, Cys-142–Cys-204, Cys-207–Cys-324, Cys-242–Cys-258, Cys-338–Cys-406, Cys-369–Cys-385, and Cys-396–Cys-424. One can recognise an SRCR domain in the interval 104–205; sequence EYRCVRVSGQ…SGHVVTLKCS (102 aa). One can recognise a Peptidase S1 domain in the interval 217–448; that stretch reads IVGGNMSSLT…FLDWIHEQLE (232 aa). N-linked (GlcNAc...) asparagine glycosylation is present at Asn-221. Active-site charge relay system residues include His-257 and Asp-304. Ser-400 functions as the Charge relay system in the catalytic mechanism.

It belongs to the peptidase S1 family. In terms of processing, undergoes autoproteolytic activation. Strongly expressed in liver, cochlea, brain, cerebellum, spleen, lung, and muscle and at a lower degree in retina, kidney, and heart. Expressed in the spiral ganglion, the cells supporting the organ of Corti and the stria vascularis. Isoform 2 is strongly expressed only in the cochlea with very faint expression in the cerebellum, spleen and muscle.

Its subcellular location is the endoplasmic reticulum membrane. In terms of biological role, probable serine protease that plays a role in hearing. Acts as a permissive factor for cochlear hair cell survival and activation at the onset of hearing and is required for saccular hair cell survival. Activates ENaC (in vitro). The sequence is that of Transmembrane protease serine 3 (Tmprss3) from Mus musculus (Mouse).